Consider the following 397-residue polypeptide: Elongation factor Tu (397 aa).

Positions 10–207 constitute a tr-type G domain; sequence KPHVNVGTIG…TLDSYIPEPV (198 aa). The interval 19–26 is G1; sequence GHVDHGKT. A GTP-binding site is contributed by 19–26; it reads GHVDHGKT. Residue T26 participates in Mg(2+) binding. The G2 stretch occupies residues 60 to 64; it reads GITIN. Y77 bears the Phosphotyrosine mark. The tract at residues 81–84 is G3; that stretch reads DCPG. 81-85 contributes to the GTP binding site; the sequence is DCPGH. Y88 carries the phosphotyrosine modification. Residue 136-139 coordinates GTP; sequence NKAD. The tract at residues 136–139 is G4; sequence NKAD. The segment at 174 to 176 is G5; that stretch reads SAL.

It belongs to the TRAFAC class translation factor GTPase superfamily. Classic translation factor GTPase family. EF-Tu/EF-1A subfamily. Monomer.

Its subcellular location is the cytoplasm. It carries out the reaction GTP + H2O = GDP + phosphate + H(+). GTP hydrolase that promotes the GTP-dependent binding of aminoacyl-tRNA to the A-site of ribosomes during protein biosynthesis. This chain is Elongation factor Tu, found in Pseudomonas aeruginosa (strain UCBPP-PA14).